The following is a 102-amino-acid chain: Large ribosomal subunit protein bL21 (102 aa).

Belongs to the bacterial ribosomal protein bL21 family. As to quaternary structure, part of the 50S ribosomal subunit. Contacts protein L20.

In terms of biological role, this protein binds to 23S rRNA in the presence of protein L20. In Geobacter sulfurreducens (strain ATCC 51573 / DSM 12127 / PCA), this protein is Large ribosomal subunit protein bL21.